Here is a 1383-residue protein sequence, read N- to C-terminus: DNA-directed RNA polymerase subunit beta'' (1383 aa).

Positions 220, 289, 296, and 299 each coordinate Zn(2+).

It belongs to the RNA polymerase beta' chain family. RpoC2 subfamily. As to quaternary structure, in plastids the minimal PEP RNA polymerase catalytic core is composed of four subunits: alpha, beta, beta', and beta''. When a (nuclear-encoded) sigma factor is associated with the core the holoenzyme is formed, which can initiate transcription. It depends on Zn(2+) as a cofactor.

The protein localises to the plastid. Its subcellular location is the chloroplast. The catalysed reaction is RNA(n) + a ribonucleoside 5'-triphosphate = RNA(n+1) + diphosphate. Its function is as follows. DNA-dependent RNA polymerase catalyzes the transcription of DNA into RNA using the four ribonucleoside triphosphates as substrates. The protein is DNA-directed RNA polymerase subunit beta'' of Oenothera elata subsp. hookeri (Hooker's evening primrose).